An 860-amino-acid chain; its full sequence is Spindle and centriole-associated protein 1 (860 aa).

Disordered stretches follow at residues 160 to 200, 232 to 254, and 293 to 330; these read ESVI…SQSN, QSQMTASSGTPSSASPSGEQKAA, and KQLLNKVKRKPDSRAPSKQKSSMLSASTASTDLPSSSN. The residue at position 236 (threonine 236) is a Phosphothreonine. A compositionally biased stretch (low complexity) spans 236–249; the sequence is TASSGTPSSASPSG. A compositionally biased stretch (polar residues) spans 308 to 330; it reads PSKQKSSMLSASTASTDLPSSSN. Residues 383-437 are a coiled coil; the sequence is RYLKESELQLRKEVETRQRLEEALGDHRELIDALTAEVLFLREENTATQARLQQY. The residue at position 646 (serine 646) is a Phosphoserine. A coiled-coil region spans residues 729-755; it reads SSMEERIAELNRQSMEARGKLLQLIEQ. Phosphoserine occurs at positions 765, 769, and 824. The disordered stretch occupies residues 790–860; that stretch reads IPGAEAPESS…GWFALSTHVS (71 aa). Residues 808–824 show a composition bias toward low complexity; that stretch reads SGLNSRRSSGAASNSCS.

As to quaternary structure, interacts with CEP120.

It localises to the cytoplasm. The protein resides in the cytoskeleton. The protein localises to the microtubule organizing center. Its subcellular location is the centrosome. It is found in the centriole. It localises to the spindle. In terms of biological role, regulator required for centriole duplication. for proper bipolar spindle formation and chromosome congression in mitosis. This chain is Spindle and centriole-associated protein 1 (SPICE1), found in Bos taurus (Bovine).